The primary structure comprises 409 residues: Arginine deiminase (409 aa).

The Amidino-cysteine intermediate role is filled by C399.

This sequence belongs to the arginine deiminase family.

Its subcellular location is the cytoplasm. The catalysed reaction is L-arginine + H2O = L-citrulline + NH4(+). Its pathway is amino-acid degradation; L-arginine degradation via ADI pathway; carbamoyl phosphate from L-arginine: step 1/2. The sequence is that of Arginine deiminase from Streptococcus pneumoniae (strain JJA).